The primary structure comprises 218 residues: Large ribosomal subunit protein uL3 (218 aa).

The protein belongs to the universal ribosomal protein uL3 family. As to quaternary structure, part of the 50S ribosomal subunit. Forms a cluster with proteins L14 and L19.

Functionally, one of the primary rRNA binding proteins, it binds directly near the 3'-end of the 23S rRNA, where it nucleates assembly of the 50S subunit. This Rhodococcus jostii (strain RHA1) protein is Large ribosomal subunit protein uL3.